The following is a 341-amino-acid chain: Diguanylate cyclase DgcP (341 aa).

In terms of domain architecture, GAF spans 18–154 (SLESLVRQLL…LFAGLIAQYI (137 aa)). Residues 204–337 (HKIMIAFIDL…KQKTPFVAHP (134 aa)) form the GGDEF domain. D212 contributes to the Mg(2+) binding site. N220, H225, and D229 together coordinate substrate. Position 255 (D255) interacts with Mg(2+). The active-site Proton acceptor is the D255.

In terms of assembly, homodimer. It depends on Mg(2+) as a cofactor.

The enzyme catalyses 2 GTP = 3',3'-c-di-GMP + 2 diphosphate. The protein operates within purine metabolism; 3',5'-cyclic di-GMP biosynthesis. Its function is as follows. Catalyzes the synthesis of cyclic-di-GMP (c-di-GMP) via the condensation of 2 GTP molecules. Cyclic-di-GMP is a second messenger which controls cell surface-associated traits in bacteria. This is Diguanylate cyclase DgcP from Escherichia coli (strain K12).